Here is a 305-residue protein sequence, read N- to C-terminus: Cytochrome c biogenesis protein CcsA (305 aa).

The next 8 membrane-spanning stretches (helical) occupy residues 11–31 (GLGF…FWAV), 37–57 (TGIV…QLVL), 63–83 (GHFP…ACTL), 96–116 (IVAA…SFAL), 141–161 (VIMV…AVLL), 212–232 (TITV…VWAN), 246–263 (TWAL…HTRL), and 275–295 (VAVV…LLGI).

This sequence belongs to the CcmF/CycK/Ccl1/NrfE/CcsA family. In terms of assembly, may interact with ccs1.

It localises to the cellular thylakoid membrane. In terms of biological role, required during biogenesis of c-type cytochromes (cytochrome c6 and cytochrome f) at the step of heme attachment. The sequence is that of Cytochrome c biogenesis protein CcsA from Parasynechococcus marenigrum (strain WH8102).